The following is a 245-amino-acid chain: Proteolipid protein DM alpha (245 aa).

Transmembrane regions (helical) follow at residues 19–35, 71–87, 117–133, and 204–220; these read LIATILCFVGVALFCGC, IIYGTASFSFLYGVLLL, FIFLTYALGVTWMGVFA, and LFIATFAGAAATVIALL.

It belongs to the myelin proteolipid protein family. As to expression, highly expressed in white matter in myelinating shark brain.

Its subcellular location is the membrane. The chain is Proteolipid protein DM alpha from Squalus acanthias (Spiny dogfish).